The primary structure comprises 108 residues: Peptidyl-prolyl cis-trans isomerase FKBP1A (108 aa).

Residues 20 to 108 (GQTCVVHYTG…VFDVELLKLE (89 aa)) form the PPIase FKBP-type domain. Lys-53 carries the post-translational modification N6-acetyllysine; alternate. Lys-53 is modified (N6-succinyllysine; alternate).

Belongs to the FKBP-type PPIase family. FKBP1 subfamily. Interacts with TGFBR1; prevents TGFBR1 phosphorylation by TGFBR2 and stabilizes it in the inactive conformation. Interacts with ACVR1B and SMAD7. Identified in a complex composed of RYR1, PDE4D, PKA, FKBP1A and protein phosphatase 1 (PP1). Interacts directly with RYR2 and RYR3. Interacts directly with RYR1. Interacts with GLMN; rapamycin and FK506 abolish the interaction with GLMN in a dose dependent manner.

The protein localises to the cytoplasm. The protein resides in the cytosol. Its subcellular location is the sarcoplasmic reticulum membrane. The enzyme catalyses [protein]-peptidylproline (omega=180) = [protein]-peptidylproline (omega=0). Inhibited by both FK506 and rapamycin. Its function is as follows. Keeps in an inactive conformation TGFBR1, the TGF-beta type I serine/threonine kinase receptor, preventing TGF-beta receptor activation in absence of ligand. Recruits SMAD7 to ACVR1B which prevents the association of SMAD2 and SMAD3 with the activin receptor complex, thereby blocking the activin signal. May modulate the RYR1 calcium channel activity. PPIases accelerate the folding of proteins. It catalyzes the cis-trans isomerization of proline imidic peptide bonds in oligopeptides. This Mus musculus (Mouse) protein is Peptidyl-prolyl cis-trans isomerase FKBP1A (Fkbp1a).